A 609-amino-acid chain; its full sequence is MPDYRSKTSTHGRNMAGARGLWRATGMKDEDFGKPIIAVVNSFTQFVPGHVHLKDLGQLVAAEIQAAGGVAKEFNTIAVDDGIAMGHDGMLYSLPSRDLIADSVEYMVNAHCADAMVCISNCDKITPGMLMAAMRLNIPVVFVSGGPMEAGKVKFRGDEKAIDLVDAMVVAADDSYTDEEVAEFERSACPTCGSCSGMFTANSMNCLTEALGLSLPGNGSIVATHANRKKLFLKAGQLIVELAKRYYEQNDASILPRSIATKAAFKNAMTLDIAMGGSTNTVLHLLAAANEAEVDFTMDDIDELSRRVPVLSKVAPAKQDVHMEDVHRAGGIMAILGELDRANLLDVSVPTVHEKTLKDALDKWDIIRTEDPDVYEFYRSSPGGVPTQVAFSQNRYYSTLDGDREKGVIRNAEHAFSKDGGLAVLYGNIALDGCIVKTAGVDESILKFTGSARVFESQDAAVEAILGNEIKAGDVVIIRYEGPRGGPGMQEMLYPTSYLKSKGLGKDCALVTDGRFSGGSSGLSIGHVSPEAAEGGAIGLVEDGDTIEIDIPNRTIHLNIDDATLAHRRTVQEAKGWHPKEERKRKVSKALKVYAMHTTSAAKGAVRVL.

D81 lines the Mg(2+) pocket. Residue C122 participates in [2Fe-2S] cluster binding. Mg(2+) contacts are provided by D123 and K124. An N6-carboxylysine modification is found at K124. [2Fe-2S] cluster is bound at residue C195. A Mg(2+)-binding site is contributed by E491. Residue S517 is the Proton acceptor of the active site.

Belongs to the IlvD/Edd family. In terms of assembly, homodimer. [2Fe-2S] cluster is required as a cofactor. Requires Mg(2+) as cofactor.

It catalyses the reaction (2R)-2,3-dihydroxy-3-methylbutanoate = 3-methyl-2-oxobutanoate + H2O. It carries out the reaction (2R,3R)-2,3-dihydroxy-3-methylpentanoate = (S)-3-methyl-2-oxopentanoate + H2O. Its pathway is amino-acid biosynthesis; L-isoleucine biosynthesis; L-isoleucine from 2-oxobutanoate: step 3/4. The protein operates within amino-acid biosynthesis; L-valine biosynthesis; L-valine from pyruvate: step 3/4. In terms of biological role, functions in the biosynthesis of branched-chain amino acids. Catalyzes the dehydration of (2R,3R)-2,3-dihydroxy-3-methylpentanoate (2,3-dihydroxy-3-methylvalerate) into 2-oxo-3-methylpentanoate (2-oxo-3-methylvalerate) and of (2R)-2,3-dihydroxy-3-methylbutanoate (2,3-dihydroxyisovalerate) into 2-oxo-3-methylbutanoate (2-oxoisovalerate), the penultimate precursor to L-isoleucine and L-valine, respectively. The protein is Dihydroxy-acid dehydratase of Acinetobacter baumannii (strain AB307-0294).